Consider the following 139-residue polypeptide: Acyl carrier protein 4, chloroplastic (139 aa).

A chloroplast-targeting transit peptide spans 1-55 (MASAAAGASICIKSASCSPLAPGRISSLRSVSLPVSRKSFPSLRSSKGSFARVSC). Residues 59–134 (PETVAKVCRI…DAADLIEKLM (76 aa)) enclose the Carrier domain. O-(pantetheine 4'-phosphoryl)serine is present on serine 94.

Belongs to the acyl carrier protein (ACP) family. 4'-phosphopantetheine is transferred from CoA to a specific serine of apo-ACP by acpS. This modification is essential for activity because fatty acids are bound in thioester linkage to the sulfhydryl of the prosthetic group.

It is found in the plastid. It localises to the chloroplast. It functions in the pathway lipid metabolism; fatty acid biosynthesis. Its function is as follows. Carrier of the growing fatty acid chain in fatty acid biosynthesis. This chain is Acyl carrier protein 4, chloroplastic (ACL1), found in Cuphea lanceolata (Cigar flower).